Reading from the N-terminus, the 565-residue chain is Mitochondrial distribution and morphology protein 34 (565 aa).

Residues 1–208 (MAFNFNWSPL…VPEYRDRESE (208 aa)) enclose the SMP-LTD domain. The segment covering 209 to 220 (SVNTLDLSSESG) has biased composition (polar residues). Disordered regions lie at residues 209 to 241 (SVNT…GNAL), 347 to 463 (FGSY…SRSA), and 533 to 565 (MQEQ…AYGH). Over residues 353 to 367 (PGRHSRSHTKKRKKR) the composition is skewed to basic residues. Positions 368-378 (VVDLRRPKTTD) are enriched in basic and acidic residues. The span at 382–391 (SVSGDSVFSS) shows a compositional bias: low complexity. Polar residues-rich tracts occupy residues 392–402 (ENATSAPTIFS) and 439–463 (QGDQ…SRSA).

The protein belongs to the MDM34 family. In terms of assembly, component of the ER-mitochondria encounter structure (ERMES) or MDM complex, composed of mmm1, mdm10, mdm12 and mdm34.

It localises to the mitochondrion outer membrane. Component of the ERMES/MDM complex, which serves as a molecular tether to connect the endoplasmic reticulum (ER) and mitochondria. Components of this complex are involved in the control of mitochondrial shape and protein biogenesis, and function in nonvesicular lipid trafficking between the ER and mitochondria. Mdm34 is required for the interaction of the ER-resident membrane protein mmm1 and the outer mitochondrial membrane-resident beta-barrel protein mdm10. The protein is Mitochondrial distribution and morphology protein 34 of Talaromyces marneffei (strain ATCC 18224 / CBS 334.59 / QM 7333) (Penicillium marneffei).